A 147-amino-acid chain; its full sequence is Interleukin-4 (147 aa).

The N-terminal stretch at 1–24 is a signal peptide; that stretch reads MGLSPHLAVTLFCFLICTGNGIHG. C47 and C87 are disulfide-bonded. N-linked (GlcNAc...) asparagine glycosylation is found at N61, N90, and N117.

This sequence belongs to the IL-4/IL-13 family.

The protein resides in the secreted. Functionally, participates in at least several B-cell activation processes as well as of other cell types. It is a costimulator of DNA-synthesis. It induces the expression of class II MHC molecules on resting B-cells. It enhances both secretion and cell surface expression of IgE and IgG1. It also regulates the expression of the low affinity Fc receptor for IgE (CD23) on both lymphocytes and monocytes. Positively regulates IL31RA expression in macrophages. Stimulates autophagy in dendritic cells by interfering with mTORC1 signaling and through the induction of RUFY4. The chain is Interleukin-4 (Il4) from Rattus norvegicus (Rat).